The chain runs to 212 residues: Urease accessory protein UreG (212 aa).

15–22 contributes to the GTP binding site; sequence GPVGSGKT.

It belongs to the SIMIBI class G3E GTPase family. UreG subfamily. In terms of assembly, homodimer. UreD, UreF and UreG form a complex that acts as a GTP-hydrolysis-dependent molecular chaperone, activating the urease apoprotein by helping to assemble the nickel containing metallocenter of UreC. The UreE protein probably delivers the nickel.

The protein resides in the cytoplasm. Its function is as follows. Facilitates the functional incorporation of the urease nickel metallocenter. This process requires GTP hydrolysis, probably effectuated by UreG. This Opitutus terrae (strain DSM 11246 / JCM 15787 / PB90-1) protein is Urease accessory protein UreG.